A 181-amino-acid polypeptide reads, in one-letter code: Ribosome maturation factor RimM (181 aa).

The 74-residue stretch at 99-172 (EDEFYQVDLI…FLIVDPMAAG (74 aa)) folds into the PRC barrel domain.

The protein belongs to the RimM family. Binds ribosomal protein uS19.

It localises to the cytoplasm. An accessory protein needed during the final step in the assembly of 30S ribosomal subunit, possibly for assembly of the head region. Essential for efficient processing of 16S rRNA. May be needed both before and after RbfA during the maturation of 16S rRNA. It has affinity for free ribosomal 30S subunits but not for 70S ribosomes. This Bartonella tribocorum (strain CIP 105476 / IBS 506) protein is Ribosome maturation factor RimM.